We begin with the raw amino-acid sequence, 622 residues long: 1-deoxy-D-xylulose-5-phosphate synthase (622 aa).

Thiamine diphosphate is bound by residues His-80 and Gly-121 to Ser-123. Asp-152 provides a ligand contact to Mg(2+). Thiamine diphosphate is bound by residues Gly-153 to Ala-154, Asn-181, Tyr-288, and Glu-369. Residue Asn-181 participates in Mg(2+) binding.

This sequence belongs to the transketolase family. DXPS subfamily. Homodimer. The cofactor is Mg(2+). Requires thiamine diphosphate as cofactor.

It catalyses the reaction D-glyceraldehyde 3-phosphate + pyruvate + H(+) = 1-deoxy-D-xylulose 5-phosphate + CO2. The protein operates within metabolic intermediate biosynthesis; 1-deoxy-D-xylulose 5-phosphate biosynthesis; 1-deoxy-D-xylulose 5-phosphate from D-glyceraldehyde 3-phosphate and pyruvate: step 1/1. Functionally, catalyzes the acyloin condensation reaction between C atoms 2 and 3 of pyruvate and glyceraldehyde 3-phosphate to yield 1-deoxy-D-xylulose-5-phosphate (DXP). This Psychromonas ingrahamii (strain DSM 17664 / CCUG 51855 / 37) protein is 1-deoxy-D-xylulose-5-phosphate synthase.